The primary structure comprises 267 residues: MQKQRTILDFQRMKAEGEKIAVLTSYDFPMTGIMDACGIDMILVGDSVGVVVAGYDNTLPVTMEDMIYHTRAVMRARPKAFVVADLPFLSYQTDLKSARLNAGLLVKDGGAAAVKIEGGVNVEETITAITDMDIPVVGHIGLTPQSLHRMGGFKVQGKGEEQAEKLMADALAVERAGAFAVVLEGIPMSLAARITAELSIPTIGIGAGPHCDGQVLVIHDILGLCSKYSPKFVKRYAELAPLIGEACSNYIAEVKGGIFPEERHGFK.

Mg(2+) is bound by residues aspartate 46 and aspartate 85. Residues 46–47, aspartate 85, and lysine 115 each bind 3-methyl-2-oxobutanoate; that span reads DS. Mg(2+) is bound at residue glutamate 117. The active-site Proton acceptor is the glutamate 184.

Belongs to the PanB family. Homodecamer; pentamer of dimers. It depends on Mg(2+) as a cofactor.

The protein localises to the cytoplasm. It carries out the reaction 3-methyl-2-oxobutanoate + (6R)-5,10-methylene-5,6,7,8-tetrahydrofolate + H2O = 2-dehydropantoate + (6S)-5,6,7,8-tetrahydrofolate. The protein operates within cofactor biosynthesis; (R)-pantothenate biosynthesis; (R)-pantoate from 3-methyl-2-oxobutanoate: step 1/2. Catalyzes the reversible reaction in which hydroxymethyl group from 5,10-methylenetetrahydrofolate is transferred onto alpha-ketoisovalerate to form ketopantoate. The chain is 3-methyl-2-oxobutanoate hydroxymethyltransferase from Citrifermentans bemidjiense (strain ATCC BAA-1014 / DSM 16622 / JCM 12645 / Bem) (Geobacter bemidjiensis).